The primary structure comprises 283 residues: Elongation factor Ts (283 aa).

The tract at residues 82-85 is involved in Mg(2+) ion dislocation from EF-Tu; sequence TDFV.

Belongs to the EF-Ts family.

It localises to the cytoplasm. In terms of biological role, associates with the EF-Tu.GDP complex and induces the exchange of GDP to GTP. It remains bound to the aminoacyl-tRNA.EF-Tu.GTP complex up to the GTP hydrolysis stage on the ribosome. This chain is Elongation factor Ts, found in Photorhabdus laumondii subsp. laumondii (strain DSM 15139 / CIP 105565 / TT01) (Photorhabdus luminescens subsp. laumondii).